Reading from the N-terminus, the 513-residue chain is Bifunctional purine biosynthesis protein PurH (513 aa).

One can recognise an MGS-like domain in the interval 1 to 147; the sequence is MIQIKRALVS…KNHKNVVVLT (147 aa).

This sequence belongs to the PurH family.

It catalyses the reaction (6R)-10-formyltetrahydrofolate + 5-amino-1-(5-phospho-beta-D-ribosyl)imidazole-4-carboxamide = 5-formamido-1-(5-phospho-D-ribosyl)imidazole-4-carboxamide + (6S)-5,6,7,8-tetrahydrofolate. The catalysed reaction is IMP + H2O = 5-formamido-1-(5-phospho-D-ribosyl)imidazole-4-carboxamide. Its pathway is purine metabolism; IMP biosynthesis via de novo pathway; 5-formamido-1-(5-phospho-D-ribosyl)imidazole-4-carboxamide from 5-amino-1-(5-phospho-D-ribosyl)imidazole-4-carboxamide (10-formyl THF route): step 1/1. The protein operates within purine metabolism; IMP biosynthesis via de novo pathway; IMP from 5-formamido-1-(5-phospho-D-ribosyl)imidazole-4-carboxamide: step 1/1. The protein is Bifunctional purine biosynthesis protein PurH of Leptospira biflexa serovar Patoc (strain Patoc 1 / Ames).